A 427-amino-acid chain; its full sequence is Tol-Pal system protein TolB (427 aa).

The N-terminal stretch at 1–23 (MKLLKRLVSVFAIVLAVGSNAFA) is a signal peptide.

It belongs to the TolB family. The Tol-Pal system is composed of five core proteins: the inner membrane proteins TolA, TolQ and TolR, the periplasmic protein TolB and the outer membrane protein Pal. They form a network linking the inner and outer membranes and the peptidoglycan layer.

The protein localises to the periplasm. Its function is as follows. Part of the Tol-Pal system, which plays a role in outer membrane invagination during cell division and is important for maintaining outer membrane integrity. The chain is Tol-Pal system protein TolB from Haemophilus influenzae (strain 86-028NP).